We begin with the raw amino-acid sequence, 279 residues long: Phosphatidylglycerol--prolipoprotein diacylglyceryl transferase (279 aa).

3 consecutive transmembrane segments (helical) span residues 22 to 42, 52 to 72, and 89 to 109; these read WYGI…QAAL, LIDI…IYFV, and IWHG…SGII. A 1,2-diacyl-sn-glycero-3-phospho-(1'-sn-glycerol) is bound at residue Arg-137. 2 helical membrane-spanning segments follow: residues 203-223 and 235-255; these read LGET…FVEA and IRVA…FVIY.

The protein belongs to the Lgt family.

Its subcellular location is the cell membrane. It carries out the reaction L-cysteinyl-[prolipoprotein] + a 1,2-diacyl-sn-glycero-3-phospho-(1'-sn-glycerol) = an S-1,2-diacyl-sn-glyceryl-L-cysteinyl-[prolipoprotein] + sn-glycerol 1-phosphate + H(+). Its pathway is protein modification; lipoprotein biosynthesis (diacylglyceryl transfer). Functionally, catalyzes the transfer of the diacylglyceryl group from phosphatidylglycerol to the sulfhydryl group of the N-terminal cysteine of a prolipoprotein, the first step in the formation of mature lipoproteins. In Staphylococcus epidermidis (strain ATCC 12228 / FDA PCI 1200), this protein is Phosphatidylglycerol--prolipoprotein diacylglyceryl transferase.